Consider the following 231-residue polypeptide: Large ribosomal subunit protein uL1 (231 aa).

This sequence belongs to the universal ribosomal protein uL1 family. In terms of assembly, part of the 50S ribosomal subunit.

In terms of biological role, binds directly to 23S rRNA. The L1 stalk is quite mobile in the ribosome, and is involved in E site tRNA release. Protein L1 is also a translational repressor protein, it controls the translation of the L11 operon by binding to its mRNA. The polypeptide is Large ribosomal subunit protein uL1 (Cellvibrio japonicus (strain Ueda107) (Pseudomonas fluorescens subsp. cellulosa)).